The following is a 349-amino-acid chain: Hydroxymethylglutaryl-CoA synthase (349 aa).

The (3S)-3-hydroxy-3-methylglutaryl-CoA site is built by Asp-30 and Ala-31. The active-site Proton donor/acceptor is the Glu-82. (3S)-3-hydroxy-3-methylglutaryl-CoA-binding residues include Cys-114 and Thr-155. Residue Cys-114 is the Acyl-thioester intermediate of the active site. Arg-203 is a binding site for CoA. Positions 205 and 238 each coordinate (3S)-3-hydroxy-3-methylglutaryl-CoA. His-238 functions as the Proton donor/acceptor in the catalytic mechanism. Residue Lys-243 coordinates CoA. 2 residues coordinate (3S)-3-hydroxy-3-methylglutaryl-CoA: Asn-270 and Ser-300.

The protein belongs to the thiolase-like superfamily. Archaeal HMG-CoA synthase family. In terms of assembly, interacts with acetoacetyl-CoA thiolase that catalyzes the precedent step in the pathway and with a DUF35 protein. The acetoacetyl-CoA thiolase/HMG-CoA synthase complex channels the intermediate via a fused CoA-binding site, which allows for efficient coupling of the endergonic thiolase reaction with the exergonic HMGCS reaction.

It carries out the reaction acetoacetyl-CoA + acetyl-CoA + H2O = (3S)-3-hydroxy-3-methylglutaryl-CoA + CoA + H(+). The protein operates within metabolic intermediate biosynthesis; (R)-mevalonate biosynthesis; (R)-mevalonate from acetyl-CoA: step 2/3. Functionally, catalyzes the condensation of acetyl-CoA with acetoacetyl-CoA to form 3-hydroxy-3-methylglutaryl-CoA (HMG-CoA). Functions in the mevalonate (MVA) pathway leading to isopentenyl diphosphate (IPP), a key precursor for the biosynthesis of isoprenoid compounds that are building blocks of archaeal membrane lipids. This Methanococcus maripaludis (strain C7 / ATCC BAA-1331) protein is Hydroxymethylglutaryl-CoA synthase.